Consider the following 290-residue polypeptide: 33 kDa chaperonin (290 aa).

2 disulfides stabilise this stretch: C235–C237 and C268–C271.

It belongs to the HSP33 family. In terms of processing, under oxidizing conditions two disulfide bonds are formed involving the reactive cysteines. Under reducing conditions zinc is bound to the reactive cysteines and the protein is inactive.

The protein localises to the cytoplasm. Functionally, redox regulated molecular chaperone. Protects both thermally unfolding and oxidatively damaged proteins from irreversible aggregation. Plays an important role in the bacterial defense system toward oxidative stress. This chain is 33 kDa chaperonin, found in Streptococcus pyogenes serotype M4 (strain MGAS10750).